Consider the following 331-residue polypeptide: Tetraacyldisaccharide 4'-kinase (331 aa).

51–58 is an ATP binding site; sequence TAGGAGKT.

The protein belongs to the LpxK family.

The catalysed reaction is a lipid A disaccharide + ATP = a lipid IVA + ADP + H(+). The protein operates within glycolipid biosynthesis; lipid IV(A) biosynthesis; lipid IV(A) from (3R)-3-hydroxytetradecanoyl-[acyl-carrier-protein] and UDP-N-acetyl-alpha-D-glucosamine: step 6/6. Its function is as follows. Transfers the gamma-phosphate of ATP to the 4'-position of a tetraacyldisaccharide 1-phosphate intermediate (termed DS-1-P) to form tetraacyldisaccharide 1,4'-bis-phosphate (lipid IVA). This Rhodospirillum rubrum (strain ATCC 11170 / ATH 1.1.1 / DSM 467 / LMG 4362 / NCIMB 8255 / S1) protein is Tetraacyldisaccharide 4'-kinase.